The primary structure comprises 448 residues: Phosphoglucosamine mutase (448 aa).

The active-site Phosphoserine intermediate is Ser-100. Mg(2+) contacts are provided by Ser-100, Asp-240, Asp-242, and Asp-244. Ser-100 bears the Phosphoserine mark.

Belongs to the phosphohexose mutase family. It depends on Mg(2+) as a cofactor. Activated by phosphorylation.

It catalyses the reaction alpha-D-glucosamine 1-phosphate = D-glucosamine 6-phosphate. Functionally, catalyzes the conversion of glucosamine-6-phosphate to glucosamine-1-phosphate. In Bacillus licheniformis (strain ATCC 14580 / DSM 13 / JCM 2505 / CCUG 7422 / NBRC 12200 / NCIMB 9375 / NCTC 10341 / NRRL NRS-1264 / Gibson 46), this protein is Phosphoglucosamine mutase.